The following is a 328-amino-acid chain: Delta(3,5)-Delta(2,4)-dienoyl-CoA isomerase, mitochondrial (328 aa).

The transit peptide at 1–33 (MAAGIVASRRLRDLLTRRLTGSNYPGLSISLRL) directs the protein to the mitochondrion. Substrate is bound by residues 116–120 (AGIDL) and Gly-174. The residue at position 231 (Lys-231) is an N6-succinyllysine. Ser-268 carries the post-translational modification Phosphoserine. The Microbody targeting signal signature appears at 326–328 (SKL). Lys-327 is modified (N6-acetyllysine).

The protein belongs to the enoyl-CoA hydratase/isomerase family. As to quaternary structure, homohexamer.

It is found in the mitochondrion. The protein resides in the peroxisome. The catalysed reaction is (3E,5Z)-octadienoyl-CoA = (2E,4E)-octadienoyl-CoA. The enzyme catalyses (3E,5Z,8Z,11Z,14Z)-eicosapentaenoyl-CoA = (2E,4E,8Z,11Z,14Z)-eicosapentaenoyl-CoA. It functions in the pathway lipid metabolism; fatty acid beta-oxidation. Functionally, isomerization of 3-trans,5-cis-dienoyl-CoA to 2-trans,4-trans-dienoyl-CoA. This chain is Delta(3,5)-Delta(2,4)-dienoyl-CoA isomerase, mitochondrial, found in Homo sapiens (Human).